We begin with the raw amino-acid sequence, 341 residues long: Phosphate acyltransferase (341 aa).

This sequence belongs to the PlsX family. In terms of assembly, homodimer. Probably interacts with PlsY.

The protein resides in the cytoplasm. The enzyme catalyses a fatty acyl-[ACP] + phosphate = an acyl phosphate + holo-[ACP]. It functions in the pathway lipid metabolism; phospholipid metabolism. Functionally, catalyzes the reversible formation of acyl-phosphate (acyl-PO(4)) from acyl-[acyl-carrier-protein] (acyl-ACP). This enzyme utilizes acyl-ACP as fatty acyl donor, but not acyl-CoA. This chain is Phosphate acyltransferase, found in Chlorobaculum parvum (strain DSM 263 / NCIMB 8327) (Chlorobium vibrioforme subsp. thiosulfatophilum).